A 503-amino-acid polypeptide reads, in one-letter code: Ell-associated factor Eaf (503 aa).

Polar residues-rich tracts occupy residues 143–158 and 170–189; these read PGQQ…TNVA and ENST…SRRN. 2 disordered regions span residues 143-223 and 251-503; these read PGQQ…PAWD and NGSQ…EDDD. A Phosphoserine modification is found at Ser-199. Positions 251-264 are enriched in polar residues; it reads NGSQANTSGSSTGS. The segment covering 281-296 has biased composition (basic residues); sequence GKQRQAPHHGHAKRQQ. Residues 297-311 are compositionally biased toward polar residues; sequence RSSPPMVQQQPNFGR. Residues 312–326 are compositionally biased toward low complexity; the sequence is NSYNGGNNYAQQQQH. The segment covering 382-397 has biased composition (acidic residues); that stretch reads DSSDSDSGSDSDDSTE. Low complexity-rich tracts occupy residues 415 to 435 and 484 to 497; these read MHHQ…QQQH and NDLL…SSNS.

This sequence belongs to the EAF family.

It is found in the nucleus. In terms of biological role, promotes transcriptional elongation by Su(Tpl)/ELL. Essential for development. In Drosophila ananassae (Fruit fly), this protein is Ell-associated factor Eaf.